A 253-amino-acid chain; its full sequence is Large ribosomal subunit protein uL1m (253 aa).

Residues 1-81 constitute a mitochondrion transit peptide; sequence MSSLIALGKR…SIALKSNRRA (81 aa).

The protein belongs to the universal ribosomal protein uL1 family. Component of the mitochondrial large ribosomal subunit (mt-LSU). Mature yeast 74S mitochondrial ribosomes consist of a small (37S) and a large (54S) subunit. The 37S small subunit contains a 15S ribosomal RNA (15S mt-rRNA) and at least 32 different proteins. The 54S large subunit contains a 21S rRNA (21S mt-rRNA) and at least 45 different proteins.

Its subcellular location is the mitochondrion. In terms of biological role, component of the mitochondrial ribosome (mitoribosome), a dedicated translation machinery responsible for the synthesis of mitochondrial genome-encoded proteins, including at least some of the essential transmembrane subunits of the mitochondrial respiratory chain. The mitoribosomes are attached to the mitochondrial inner membrane and translation products are cotranslationally integrated into the membrane. This chain is Large ribosomal subunit protein uL1m (mrpl1), found in Schizosaccharomyces pombe (strain 972 / ATCC 24843) (Fission yeast).